Here is a 107-residue protein sequence, read N- to C-terminus: UPF0145 protein LVIS_1527 (107 aa).

It belongs to the UPF0145 family.

The chain is UPF0145 protein LVIS_1527 from Levilactobacillus brevis (strain ATCC 367 / BCRC 12310 / CIP 105137 / JCM 1170 / LMG 11437 / NCIMB 947 / NCTC 947) (Lactobacillus brevis).